Reading from the N-terminus, the 320-residue chain is Acetyl-coenzyme A carboxylase carboxyl transferase subunit alpha (320 aa).

The CoA carboxyltransferase C-terminal domain maps to 34–288 (RLEEALEAAR…GEALERVLAG (255 aa)).

This sequence belongs to the AccA family. Acetyl-CoA carboxylase is a heterohexamer composed of biotin carboxyl carrier protein (AccB), biotin carboxylase (AccC) and two subunits each of ACCase subunit alpha (AccA) and ACCase subunit beta (AccD).

The protein resides in the cytoplasm. It carries out the reaction N(6)-carboxybiotinyl-L-lysyl-[protein] + acetyl-CoA = N(6)-biotinyl-L-lysyl-[protein] + malonyl-CoA. Its pathway is lipid metabolism; malonyl-CoA biosynthesis; malonyl-CoA from acetyl-CoA: step 1/1. Component of the acetyl coenzyme A carboxylase (ACC) complex. First, biotin carboxylase catalyzes the carboxylation of biotin on its carrier protein (BCCP) and then the CO(2) group is transferred by the carboxyltransferase to acetyl-CoA to form malonyl-CoA. In Rubrobacter xylanophilus (strain DSM 9941 / JCM 11954 / NBRC 16129 / PRD-1), this protein is Acetyl-coenzyme A carboxylase carboxyl transferase subunit alpha.